The sequence spans 89 residues: UPF0298 protein GTNG_0961 (89 aa).

The protein belongs to the UPF0298 family.

It is found in the cytoplasm. The protein is UPF0298 protein GTNG_0961 of Geobacillus thermodenitrificans (strain NG80-2).